Here is a 456-residue protein sequence, read N- to C-terminus: Ribonuclease inhibitor (456 aa).

Residue methionine 1 is modified to N-acetylmethionine. LRR repeat units follow at residues 15-43 (WTEL…CKDI), 44-71 (SSAV…VGLV), 72-100 (LQGL…CGIL), 101-128 (PGML…LKLL), 129-157 (CEGL…CEPL), 158-185 (ASVL…VRIL), 186-214 (CQGL…CKDL), 215-242 (CDVV…IAAL), 243-271 (CPGL…CKDL), 272-299 (CRVL…ARLL), 300-328 (CESL…CPYF), 329-356 (CSVL…VQEL), 357-385 (CKAL…CSSL), 386-413 (ANVL…VLQL), and 414-442 (LESL…EEQL). Serine 86 carries the phosphoserine modification.

Forms high-affinity heterodimers with RNASE1, ANG and RNASE2.

It is found in the cytoplasm. Its subcellular location is the nucleus. Ribonuclease inhibitor which inhibits RNASE1, RNASE2 and angiogenin (ANG). May play a role in redox homeostasis. Required to inhibit the cytotoxic tRNA ribonuclease activity of ANG in the cytoplasm in absence of stress. Relocates to the nucleus in response to stress, relieving inhibition of ANG in the cytoplasm, and inhibiting the angiogenic activity of ANG in the nucleus. In Mus musculus (Mouse), this protein is Ribonuclease inhibitor (Rnh1).